We begin with the raw amino-acid sequence, 406 residues long: Peptidase T (406 aa).

Residue H80 coordinates Zn(2+). The active site involves D82. D141 lines the Zn(2+) pocket. The Proton acceptor role is filled by E175. Zn(2+)-binding residues include E176, D198, and H380.

It belongs to the peptidase M20B family. It depends on Zn(2+) as a cofactor.

The protein resides in the cytoplasm. It carries out the reaction Release of the N-terminal residue from a tripeptide.. In terms of biological role, cleaves the N-terminal amino acid of tripeptides. The sequence is that of Peptidase T from Streptococcus mutans serotype c (strain ATCC 700610 / UA159).